A 185-amino-acid polypeptide reads, in one-letter code: Ribosome-recycling factor (185 aa).

The protein belongs to the RRF family.

It localises to the cytoplasm. Its function is as follows. Responsible for the release of ribosomes from messenger RNA at the termination of protein biosynthesis. May increase the efficiency of translation by recycling ribosomes from one round of translation to another. The sequence is that of Ribosome-recycling factor from Xanthomonas euvesicatoria pv. vesicatoria (strain 85-10) (Xanthomonas campestris pv. vesicatoria).